The sequence spans 339 residues: Ribosomal RNA small subunit methyltransferase C (339 aa).

Belongs to the methyltransferase superfamily. RsmC family. Monomer.

Its subcellular location is the cytoplasm. The enzyme catalyses guanosine(1207) in 16S rRNA + S-adenosyl-L-methionine = N(2)-methylguanosine(1207) in 16S rRNA + S-adenosyl-L-homocysteine + H(+). Functionally, specifically methylates the guanine in position 1207 of 16S rRNA in the 30S particle. This chain is Ribosomal RNA small subunit methyltransferase C, found in Aliivibrio fischeri (strain ATCC 700601 / ES114) (Vibrio fischeri).